The primary structure comprises 430 residues: MTSVVVVGTQWGDEGKGKITDFLSADAEVIARYQGGDNAGHTIVIDGKKFKLHLIPSGIFFPQKISVIGNGVVVNPKSLVKELAYLHDEGVTTDNLRISDRAHVILPYHIQLDQLQEDAKGDNKIGTTIKGIGPAYMDKAARVGIRIADLLDKDIFAERLRINLAEKNRLFEKMYDSTPLDFDAIFEEYYAYGQEIKQYVTDTSVILNDALDAGKRVLFEGAQGVMLDIDQGTYPFVTSSNPVAGGVTIGSGVGPSKINKVVGVCKAYTSRVGDGPFPTELFDEVGERIREVGHEYGTTTGRPRRVGWFDSVVMRHSRRVSGITNLSLNSIDVLSGLDTVKICVAYDLDGKRIDYYPASLEQLKRCKPIYEELPGWQEDITGVRSLDELPENARNYVRRVGELVGVRISTFSVGPGREQTNILESVWASI.

GTP is bound by residues 12–18 (GDEGKGK) and 40–42 (GHT). D13 (proton acceptor) is an active-site residue. Mg(2+) is bound by residues D13 and G40. Residues 13–16 (DEGK), 38–41 (NAGH), T128, R142, Q223, T238, and R302 contribute to the IMP site. The Proton donor role is filled by H41. Position 298-304 (298-304 (TTTGRPR)) interacts with substrate. Residues R304, 330-332 (SID), and 412-414 (SVG) each bind GTP.

Belongs to the adenylosuccinate synthetase family. Homodimer. Mg(2+) serves as cofactor.

It localises to the cytoplasm. The enzyme catalyses IMP + L-aspartate + GTP = N(6)-(1,2-dicarboxyethyl)-AMP + GDP + phosphate + 2 H(+). It participates in purine metabolism; AMP biosynthesis via de novo pathway; AMP from IMP: step 1/2. Its function is as follows. Plays an important role in the de novo pathway of purine nucleotide biosynthesis. Catalyzes the first committed step in the biosynthesis of AMP from IMP. The polypeptide is Adenylosuccinate synthetase (Streptococcus pyogenes serotype M2 (strain MGAS10270)).